The sequence spans 313 residues: MTPRAIICLAGPTAAGKSASTLALAQRWPLEIINVDSATIYRGMDIGTAKPSAAERAQVPQHLLDIRDPAQSYSAAKFRADALRLIAEIHARGRIPLLAGGTMLYYKALREGLDDLPQADPALRAELEARAARLGWPALHAELALLDPATAARLSPNDSQRIQRALEICRLAGQPMSALLQGERRGDAPSPYRYVTLSLEPSERAALHARIAQRFDAMLAAGLVEEVRGLHARPDLHPGLPSVRCVGYRQMWSYLDGDIDLDTAREQGVAATRQLAKRQLTWLRAQPERVIIDCLAGDAVARTVDAMARALPD.

11 to 18 contributes to the ATP binding site; that stretch reads GPTAAGKS. Residue 13 to 18 participates in substrate binding; it reads TAAGKS. Interaction with substrate tRNA stretches follow at residues 36 to 39, 160 to 164, and 244 to 249; these read DSAT, QRIQR, and RCVGYR.

The protein belongs to the IPP transferase family. Monomer. The cofactor is Mg(2+).

It carries out the reaction adenosine(37) in tRNA + dimethylallyl diphosphate = N(6)-dimethylallyladenosine(37) in tRNA + diphosphate. In terms of biological role, catalyzes the transfer of a dimethylallyl group onto the adenine at position 37 in tRNAs that read codons beginning with uridine, leading to the formation of N6-(dimethylallyl)adenosine (i(6)A). This chain is tRNA dimethylallyltransferase, found in Bordetella parapertussis (strain 12822 / ATCC BAA-587 / NCTC 13253).